A 555-amino-acid polypeptide reads, in one-letter code: Dihydroxy-acid dehydratase (555 aa).

D78 is a binding site for Mg(2+). Residue C119 participates in [2Fe-2S] cluster binding. Residues D120 and K121 each coordinate Mg(2+). K121 is subject to N6-carboxylysine. A [2Fe-2S] cluster-binding site is contributed by C192. Position 444 (E444) interacts with Mg(2+). S470 (proton acceptor) is an active-site residue.

Belongs to the IlvD/Edd family. In terms of assembly, homodimer. [2Fe-2S] cluster serves as cofactor. Mg(2+) is required as a cofactor.

It carries out the reaction (2R)-2,3-dihydroxy-3-methylbutanoate = 3-methyl-2-oxobutanoate + H2O. It catalyses the reaction (2R,3R)-2,3-dihydroxy-3-methylpentanoate = (S)-3-methyl-2-oxopentanoate + H2O. Its pathway is amino-acid biosynthesis; L-isoleucine biosynthesis; L-isoleucine from 2-oxobutanoate: step 3/4. The protein operates within amino-acid biosynthesis; L-valine biosynthesis; L-valine from pyruvate: step 3/4. In terms of biological role, functions in the biosynthesis of branched-chain amino acids. Catalyzes the dehydration of (2R,3R)-2,3-dihydroxy-3-methylpentanoate (2,3-dihydroxy-3-methylvalerate) into 2-oxo-3-methylpentanoate (2-oxo-3-methylvalerate) and of (2R)-2,3-dihydroxy-3-methylbutanoate (2,3-dihydroxyisovalerate) into 2-oxo-3-methylbutanoate (2-oxoisovalerate), the penultimate precursor to L-isoleucine and L-valine, respectively. The protein is Dihydroxy-acid dehydratase of Halalkalibacterium halodurans (strain ATCC BAA-125 / DSM 18197 / FERM 7344 / JCM 9153 / C-125) (Bacillus halodurans).